Reading from the N-terminus, the 365-residue chain is MEMVRPAARRSVGETQPPLPSIYSLTLDELKEWLVAQGEKPFRATQIYEWLYQNRVTDFADMTNLPKRLREQLASSFSITTLKTVVKQTSKDGTIKFLFELHDGYSIETVLMRHNYGNSVCVTTQVGCRIGCTFCASTLGGLKRHLEAGEIVAQVVQVQKALDDTNERVSSIVVMGIGEPFDNYDALIKFLRIVNHPKGLNIGARHITVSTSGIIPKIYQFADEGMQINFAISLHAPTNELRTKLMPINKAYPLPKLMEAVRYYIEKTGRRVTFEYGLFGGVNDQLEHAEQLAELIKGLKCHVNLIPVNYVPERNYVRTPRSQIFAFERALKKHGINVTIRREHGHDIDAACGQLRAKERKEETR.

Residue Glu108 is the Proton acceptor of the active site. In terms of domain architecture, Radical SAM core spans 114–347 (HNYGNSVCVT…VTIRREHGHD (234 aa)). Cys121 and Cys352 are oxidised to a cystine. [4Fe-4S] cluster-binding residues include Cys128, Cys132, and Cys135. S-adenosyl-L-methionine contacts are provided by residues 178–179 (GE), Ser210, 233–235 (SLH), and Asn309. Cys352 acts as the S-methylcysteine intermediate in catalysis.

It belongs to the radical SAM superfamily. RlmN family. [4Fe-4S] cluster is required as a cofactor.

It is found in the cytoplasm. The catalysed reaction is adenosine(2503) in 23S rRNA + 2 reduced [2Fe-2S]-[ferredoxin] + 2 S-adenosyl-L-methionine = 2-methyladenosine(2503) in 23S rRNA + 5'-deoxyadenosine + L-methionine + 2 oxidized [2Fe-2S]-[ferredoxin] + S-adenosyl-L-homocysteine. It carries out the reaction adenosine(37) in tRNA + 2 reduced [2Fe-2S]-[ferredoxin] + 2 S-adenosyl-L-methionine = 2-methyladenosine(37) in tRNA + 5'-deoxyadenosine + L-methionine + 2 oxidized [2Fe-2S]-[ferredoxin] + S-adenosyl-L-homocysteine. Functionally, specifically methylates position 2 of adenine 2503 in 23S rRNA and position 2 of adenine 37 in tRNAs. The chain is Probable dual-specificity RNA methyltransferase RlmN from Geobacillus kaustophilus (strain HTA426).